We begin with the raw amino-acid sequence, 199 residues long: Holliday junction branch migration complex subunit RuvA (199 aa).

The domain I stretch occupies residues 1 to 63 (MYEYLTGLVT…EDNISLFGFT (63 aa)). A domain II region spans residues 64-142 (DQNEKNLFMQ…NESSSSLFAT (79 aa)). The segment at 143 to 149 (TQLTVDA) is flexible linker. The interval 150 to 199 (TVNRELKDALEALAALGYKERDIKKVQKALMKEEQMATDEYLRQALRLLN) is domain III.

It belongs to the RuvA family. As to quaternary structure, homotetramer. Forms an RuvA(8)-RuvB(12)-Holliday junction (HJ) complex. HJ DNA is sandwiched between 2 RuvA tetramers; dsDNA enters through RuvA and exits via RuvB. An RuvB hexamer assembles on each DNA strand where it exits the tetramer. Each RuvB hexamer is contacted by two RuvA subunits (via domain III) on 2 adjacent RuvB subunits; this complex drives branch migration. In the full resolvosome a probable DNA-RuvA(4)-RuvB(12)-RuvC(2) complex forms which resolves the HJ.

The protein localises to the cytoplasm. In terms of biological role, the RuvA-RuvB-RuvC complex processes Holliday junction (HJ) DNA during genetic recombination and DNA repair, while the RuvA-RuvB complex plays an important role in the rescue of blocked DNA replication forks via replication fork reversal (RFR). RuvA specifically binds to HJ cruciform DNA, conferring on it an open structure. The RuvB hexamer acts as an ATP-dependent pump, pulling dsDNA into and through the RuvAB complex. HJ branch migration allows RuvC to scan DNA until it finds its consensus sequence, where it cleaves and resolves the cruciform DNA. The sequence is that of Holliday junction branch migration complex subunit RuvA from Limosilactobacillus reuteri subsp. reuteri (strain JCM 1112) (Lactobacillus reuteri).